The chain runs to 385 residues: 3-hydroxyisobutyryl-CoA hydrolase, mitochondrial (385 aa).

Substrate-binding residues include glutamate 120, glycine 145, glutamate 168, and aspartate 176.

This sequence belongs to the enoyl-CoA hydratase/isomerase family.

It localises to the mitochondrion. It catalyses the reaction 3-hydroxy-2-methylpropanoyl-CoA + H2O = 3-hydroxy-2-methylpropanoate + CoA + H(+). The protein operates within amino-acid degradation; L-valine degradation. In terms of biological role, hydrolyzes 3-hydroxyisobutyryl-CoA (HIBYL-CoA), a saline catabolite. Has high activity toward isobutyryl-CoA. Could be an isobutyryl-CoA dehydrogenase that functions in valine catabolism. Also hydrolyzes 3-hydroxypropanoyl-CoA. This Gallus gallus (Chicken) protein is 3-hydroxyisobutyryl-CoA hydrolase, mitochondrial (HIBCH).